The following is a 518-amino-acid chain: Dihydropyrimidinase 2 (518 aa).

Zn(2+)-binding residues include histidine 59, histidine 61, and lysine 152. At lysine 152 the chain carries N6-carboxylysine. Position 157 (tyrosine 157) interacts with substrate. Zn(2+)-binding residues include histidine 185 and histidine 241. Serine 291 is a substrate binding site. Aspartate 319 is a Zn(2+) binding site. Asparagine 340 contacts substrate.

It belongs to the metallo-dependent hydrolases superfamily. Hydantoinase/dihydropyrimidinase family. As to quaternary structure, homotetramer. It depends on Zn(2+) as a cofactor. Post-translationally, carboxylation allows a single lysine to coordinate two zinc ions.

It catalyses the reaction 5,6-dihydrouracil + H2O = 3-(carbamoylamino)propanoate + H(+). The protein is Dihydropyrimidinase 2 (dhp-2) of Caenorhabditis briggsae.